Consider the following 227-residue polypeptide: Protein rapunzel (227 aa).

Residues 179–196 (LAYLFCIGFIALMGYYGI) traverse the membrane as a helical segment.

The protein localises to the membrane. This is Protein rapunzel from Danio rerio (Zebrafish).